Consider the following 149-residue polypeptide: Large ribosomal subunit protein uL15 (149 aa).

The segment at 1–53 (MRLHTLQPAPGAKSTRKRVGRGTSSGHGKTSGFGHKGQKARSGRVGKRGFEGG) is disordered. Residues 23–35 (TSSGHGKTSGFGH) are compositionally biased toward gly residues. Residues 36-47 (KGQKARSGRVGK) show a composition bias toward basic residues.

Belongs to the universal ribosomal protein uL15 family. Part of the 50S ribosomal subunit.

In terms of biological role, binds to the 23S rRNA. The polypeptide is Large ribosomal subunit protein uL15 (Coprothermobacter proteolyticus (strain ATCC 35245 / DSM 5265 / OCM 4 / BT)).